The primary structure comprises 193 residues: Large ribosomal subunit protein bL25 (193 aa).

Belongs to the bacterial ribosomal protein bL25 family. CTC subfamily. As to quaternary structure, part of the 50S ribosomal subunit; part of the 5S rRNA/L5/L18/L25 subcomplex. Contacts the 5S rRNA. Binds to the 5S rRNA independently of L5 and L18.

This is one of the proteins that binds to the 5S RNA in the ribosome where it forms part of the central protuberance. The polypeptide is Large ribosomal subunit protein bL25 (Hydrogenovibrio crunogenus (strain DSM 25203 / XCL-2) (Thiomicrospira crunogena)).